Reading from the N-terminus, the 423-residue chain is Serine--tRNA ligase (423 aa).

L-serine is bound at residue 231-233 (TGE). Position 262–264 (262–264 (RSE)) interacts with ATP. Glu-285 is an L-serine binding site. 349–352 (EISS) is an ATP binding site. Residue Ser-385 coordinates L-serine.

Belongs to the class-II aminoacyl-tRNA synthetase family. Type-1 seryl-tRNA synthetase subfamily. Homodimer. The tRNA molecule binds across the dimer.

Its subcellular location is the cytoplasm. The catalysed reaction is tRNA(Ser) + L-serine + ATP = L-seryl-tRNA(Ser) + AMP + diphosphate + H(+). It catalyses the reaction tRNA(Sec) + L-serine + ATP = L-seryl-tRNA(Sec) + AMP + diphosphate + H(+). It participates in aminoacyl-tRNA biosynthesis; selenocysteinyl-tRNA(Sec) biosynthesis; L-seryl-tRNA(Sec) from L-serine and tRNA(Sec): step 1/1. Its function is as follows. Catalyzes the attachment of serine to tRNA(Ser). Is also able to aminoacylate tRNA(Sec) with serine, to form the misacylated tRNA L-seryl-tRNA(Sec), which will be further converted into selenocysteinyl-tRNA(Sec). The protein is Serine--tRNA ligase of Coxiella burnetii (strain RSA 331 / Henzerling II).